Consider the following 1368-residue polypeptide: Kinesin-like protein KIF24 (1368 aa).

Residues 1 to 64 enclose the SAM domain; it reads MASWLYECLC…FQLIKIIKIM (64 aa). The interval 89-112 is disordered; the sequence is ELRSGPRRQLNFDSPADNKDRNAS. S102 and S112 each carry phosphoserine. The region spanning 223–546 is the Kinesin motor domain; the sequence is KIRVCVRKRP…LRYADRVKEL (324 aa). Position 313 to 320 (313 to 320) interacts with ATP; it reads GQTGAGKT. S478 is subject to Phosphoserine. The interval 478–709 is interaction with MPHOSPH9; it reads SLLALKECIR…STKCKKVQTV (232 aa). Polar residues predominate over residues 557 to 576; sequence TSRNRTSGNSSPKRIQSSPG. 2 disordered regions span residues 557–584 and 602–639; these read TSRN…DKCS and GSTR…SPSQ. S584 carries the phosphoserine modification. T621 carries the phosphothreonine; by NEK2 modification. S622 bears the Phosphoserine; by NEK2 mark. The residue at position 646 (S646) is a Phosphoserine. Disordered stretches follow at residues 651-670, 729-753, 792-849, 864-938, and 952-984; these read TVRS…PLCS, HRAE…WTNI, QYRP…NTLE, GPEK…LAEK, and RGGG…EEDG. Residues 819–830 are compositionally biased toward acidic residues; it reads QVEELDDSDFSE. Phosphoserine is present on residues S826 and S829. Polar residues-rich tracts occupy residues 839–849 and 871–881; these read QRATKQRNTLE and ERQQSLFSSPR. Over residues 882-906 the composition is skewed to basic and acidic residues; it reads TGDKKDLTKSWVDSRDPINHRRAAL. S1012 is subject to Phosphoserine. Disordered regions lie at residues 1054–1073 and 1086–1148; these read MSLL…QLVQ and GGPV…SREA. Residues 1106–1119 show a composition bias toward polar residues; sequence SSATRHLWLSSSPP. The span at 1138 to 1148 shows a compositional bias: basic and acidic residues; it reads HPADKLPSREA.

The protein belongs to the TRAFAC class myosin-kinesin ATPase superfamily. Kinesin family. Interacts with CCP110, CEP97, TALPID3. Interacts with MPHOSPH9.

It localises to the cytoplasm. The protein resides in the cytoskeleton. It is found in the microtubule organizing center. Its subcellular location is the centrosome. The protein localises to the centriole. Its function is as follows. Microtubule-dependent motor protein that acts as a negative regulator of ciliogenesis by mediating recruitment of CCP110 to mother centriole in cycling cells, leading to restrict nucleation of cilia at centrioles. Mediates depolymerization of microtubules of centriolar origin, possibly to suppress aberrant cilia formation. Following activation by NEK2 involved in disassembly of primary cilium during G2/M phase but does not disassemble fully formed ciliary axonemes. As cilium assembly and disassembly is proposed to coexist in a dynamic equilibrium may suppress nascent cilium assembly and, potentially, ciliar re-assembly in cells that have already disassembled their cilia ensuring the completion of cilium removal in the later stages of the cell cycle. Plays an important role in recruiting MPHOSPH9, a negative regulator of cilia formation to the distal end of mother centriole. This is Kinesin-like protein KIF24 (KIF24) from Homo sapiens (Human).